The primary structure comprises 185 residues: uncharacterized protein (185 aa).

Residues 1–69 (MSSFIDSIKS…SSDCSRAERT (69 aa)) are Cytoplasmic-facing. A helical membrane pass occupies residues 70–90 (FNLILFAIVDLVICCESMAFF). A topological domain (extracellular) is located at residue Asn91. The chain crosses the membrane as a helical span at residues 92–112 (LLLKLPSMLLVSFLTMLVFSI). Over 113 to 118 (SYSWSA) the chain is Cytoplasmic. Residues 119–139 (FNWISFAFSSASFLMKACILF) traverse the membrane as a helical segment. The Extracellular portion of the chain corresponds to 140 to 185 (NSSFTWFGVKAVIAEDMLYRMVRGLFCASFVKQLQTTFLATAIVLC).

It localises to the membrane. This is an uncharacterized protein from Saccharomyces cerevisiae (strain ATCC 204508 / S288c) (Baker's yeast).